The sequence spans 145 residues: uncharacterized protein (145 aa).

4 helical membrane-spanning segments follow: residues 1–21 (MELF…YFLI), 28–48 (TVLI…MGAL), 54–74 (SMTS…AYVM), and 96–116 (FFLI…IPSA).

This sequence belongs to the DcuC/DcuD transporter (TC 2.A.61) family.

The protein localises to the cell membrane. This is an uncharacterized protein from Haemophilus influenzae (strain ATCC 51907 / DSM 11121 / KW20 / Rd).